The chain runs to 537 residues: Immunoglobulin-like domain-containing receptor 1 (537 aa).

Positions 1 to 22 (MGCGLLAAGLLLFTWLPAGCLS) are cleaved as a signal peptide. The region spanning 23–161 (LLVTVQHTER…TSGDPDKEVK (139 aa)) is the Ig-like V-type domain. Residues 23 to 166 (LLVTVQHTER…DKEVKLIVLH (144 aa)) are Extracellular-facing. Residues Cys44 and Cys144 are joined by a disulfide bond. Residues 167 to 187 (WLTVIFIILGALLLLLLIGVC) traverse the membrane as a helical segment. Residues 188–537 (WCQCCPQYCC…SSHSGRSVVI (350 aa)) lie on the Cytoplasmic side of the membrane. The disordered stretch occupies residues 333 to 537 (PPLIRDPPSS…SSHSGRSVVI (205 aa)). Positions 341 to 357 (SSRTSNPSHQQRLNAVS) are enriched in polar residues. Composition is skewed to basic and acidic residues over residues 359-380 (RHCD…RELQ) and 434-444 (RRPEPREGAQR). A compositionally biased stretch (basic residues) spans 480 to 490 (QRRHHHRRRRS). Ser490 and Ser492 each carry phosphoserine. Residues 518-530 (GNVERRLERESSH) show a composition bias toward basic and acidic residues.

The protein belongs to the immunoglobulin superfamily. LISCH7 family. Homooligomer. Interacts with MARVELD2 and OCLN; the interaction is required to recruit MARVELD2 to tricellular contacts. Interacts (via C-terminus) with TRA2A, TRA2B and SRSF1. Interacts with PLSCR1. In terms of tissue distribution, expressed in the vestibule and in hair cells and supporting cells of the cochlea. Expressed in epithelial tissues. Highly expressed in colon but also detected in small intestine, bladder and lung. In colon, expressed in the upper portion of the crypts (at protein level). Expressed in CCK secretory cells of the proximal small intestine (at protein level). Expressed in the organ of Corti, stria vascularis, utricle and saccule of the inner ear.

The protein resides in the cell membrane. Its subcellular location is the cell junction. It localises to the tight junction. The protein localises to the nucleus. It is found in the cytoplasm. Maintains epithelial barrier function by recruiting MARVELD2/tricellulin to tricellular tight junctions (tTJs). Crucial for normal hearing by maintaining the structural and functional integrity of tTJs, which are critical for the survival of auditory neurosensory HCs. Mediates fatty acids and lipoproteins-stimulated CCK/cholecystokinin secretion in the small intestine. In the inner ear, may regulate alternative pre-mRNA splicing via binding to TRA2A, TRA2B and SRSF1. The polypeptide is Immunoglobulin-like domain-containing receptor 1 (Mus musculus (Mouse)).